Consider the following 120-residue polypeptide: Large ribosomal subunit protein uL18 (120 aa).

It belongs to the universal ribosomal protein uL18 family. Part of the 50S ribosomal subunit; part of the 5S rRNA/L5/L18/L25 subcomplex. Contacts the 5S and 23S rRNAs.

Its function is as follows. This is one of the proteins that bind and probably mediate the attachment of the 5S RNA into the large ribosomal subunit, where it forms part of the central protuberance. The sequence is that of Large ribosomal subunit protein uL18 from Geobacillus thermodenitrificans (strain NG80-2).